We begin with the raw amino-acid sequence, 890 residues long: DNA mismatch repair protein MutS (890 aa).

634–641 serves as a coordination point for ATP; that stretch reads GPNMGGKS.

The protein belongs to the DNA mismatch repair MutS family.

In terms of biological role, this protein is involved in the repair of mismatches in DNA. It is possible that it carries out the mismatch recognition step. This protein has a weak ATPase activity. This Burkholderia pseudomallei (strain 1710b) protein is DNA mismatch repair protein MutS.